Here is a 257-residue protein sequence, read N- to C-terminus: Snake venom serine protease KN9 (257 aa).

Positions 1 to 18 (MVLIRVLANLLILQLSYA) are cleaved as a signal peptide. A propeptide spanning residues 19 to 24 (QKSSEL) is cleaved from the precursor. One can recognise a Peptidase S1 domain in the interval 25 to 248 (VVGGDECNIN…HLDWIKSIIA (224 aa)). 5 disulfides stabilise this stretch: Cys31-Cys162, Cys49-Cys65, Cys141-Cys209, Cys173-Cys188, and Cys199-Cys224. His64 functions as the Charge relay system in the catalytic mechanism. Asn102 carries N-linked (GlcNAc...) asparagine glycosylation. The active-site Charge relay system is Asp109. 2 N-linked (GlcNAc...) asparagine glycosylation sites follow: Asn120 and Asn121. The Charge relay system role is filled by Ser203.

It belongs to the peptidase S1 family. Snake venom subfamily. In terms of assembly, monomer. As to expression, expressed by the venom gland.

The protein resides in the secreted. Functionally, snake venom serine protease that may act in the hemostasis system of the prey. This Trimeresurus stejnegeri (Chinese green tree viper) protein is Snake venom serine protease KN9.